Consider the following 192-residue polypeptide: Ion-translocating oxidoreductase complex subunit A (192 aa).

The next 6 helical transmembrane spans lie at 5 to 25 (LLLLVGTVLVNNFVLVKFLGL), 39 to 59 (IGMGLATTFVLTLASVSAYLV), 63 to 83 (ILTPLGIEYLRTMSFILVIAV), 102 to 122 (LLGIFLPLITTNCAVLGVALL), 134 to 154 (IIYGFGAAVGFSLVLILFAAM), and 171 to 191 (SIAMITAGLMSLAFMGFTGLV).

Belongs to the NqrDE/RnfAE family. The complex is composed of six subunits: RnfA, RnfB, RnfC, RnfD, RnfE and RnfG.

Its subcellular location is the cell inner membrane. Functionally, part of a membrane-bound complex that couples electron transfer with translocation of ions across the membrane. This Vibrio atlanticus (strain LGP32) (Vibrio splendidus (strain Mel32)) protein is Ion-translocating oxidoreductase complex subunit A.